Here is a 289-residue protein sequence, read N- to C-terminus: Elongation factor Ts (289 aa).

Positions Thr-80–Val-83 are involved in Mg(2+) ion dislocation from EF-Tu.

This sequence belongs to the EF-Ts family.

It is found in the cytoplasm. Its function is as follows. Associates with the EF-Tu.GDP complex and induces the exchange of GDP to GTP. It remains bound to the aminoacyl-tRNA.EF-Tu.GTP complex up to the GTP hydrolysis stage on the ribosome. The sequence is that of Elongation factor Ts from Francisella tularensis subsp. tularensis (strain FSC 198).